The chain runs to 153 residues: Small ribosomal subunit protein uS9 (153 aa).

Residues 122-153 (KKAGFLTRDPRSTERKKYGLKKARKAPQYSKR) are disordered. A compositionally biased stretch (basic and acidic residues) spans 129–138 (RDPRSTERKK). The span at 139–153 (YGLKKARKAPQYSKR) shows a compositional bias: basic residues.

The protein belongs to the universal ribosomal protein uS9 family.

The polypeptide is Small ribosomal subunit protein uS9 (rpsI) (Mycobacterium leprae (strain TN)).